Consider the following 409-residue polypeptide: Serine/threonine transporter SstT (409 aa).

The next 9 helical transmembrane spans lie at 24–44 (LALG…AGLF), 48–68 (FVGA…AATI), 82–102 (IIVL…IAGM), 142–162 (AIAN…GAAL), 194–214 (LGIF…ALAG), 218–238 (LLAV…PAIV), 292–312 (IPLG…VLAM), 319–339 (GIQV…VSAC), and 365–385 (VAMQ…SAET).

This sequence belongs to the dicarboxylate/amino acid:cation symporter (DAACS) (TC 2.A.23) family.

The protein localises to the cell inner membrane. It catalyses the reaction L-serine(in) + Na(+)(in) = L-serine(out) + Na(+)(out). The enzyme catalyses L-threonine(in) + Na(+)(in) = L-threonine(out) + Na(+)(out). Functionally, involved in the import of serine and threonine into the cell, with the concomitant import of sodium (symport system). The chain is Serine/threonine transporter SstT from Neisseria meningitidis serogroup C (strain 053442).